The sequence spans 112 residues: Colipase (112 aa).

The N-terminal stretch at 1-17 is a signal peptide; it reads MEKVLALLLVTLTVAYA. Residues 18–22 constitute a propeptide, enterostatin, activation peptide; it reads VPDPR. 5 disulfides stabilise this stretch: Cys34-Cys45, Cys40-Cys56, Cys44-Cys78, Cys66-Cys86, and Cys80-Cys104.

Belongs to the colipase family. Forms a 1:1 stoichiometric complex with pancreatic lipase. As to expression, expressed by the pancreas.

It is found in the secreted. Its function is as follows. Colipase is a cofactor of pancreatic lipase. It allows the lipase to anchor itself to the lipid-water interface. Without colipase the enzyme is washed off by bile salts, which have an inhibitory effect on the lipase. Enterostatin has a biological activity as a satiety signal. This Sus scrofa (Pig) protein is Colipase (CLPS).